A 366-amino-acid chain; its full sequence is Galactoside alpha-(1,2)-fucosyltransferase 1 (366 aa).

Over 1-8 the chain is Cytoplasmic; it reads MWPRSHRH. Residues 9–25 traverse the membrane as a helical; Signal-anchor for type II membrane protein segment; sequence LCLAFLLVCVLSAISFL. Residues 26–366 lie on the Lumenal side of the membrane; that stretch reads IHFHQDSIRH…LSPLWPLAEP (341 aa). Asn-66, Asn-302, and Asn-328 each carry an N-linked (GlcNAc...) asparagine glycan.

It belongs to the glycosyltransferase 11 family.

Its subcellular location is the golgi apparatus. The protein resides in the golgi stack membrane. The catalysed reaction is a beta-D-galactosyl-(1-&gt;4)-N-acetyl-beta-D-glucosaminyl derivative + GDP-beta-L-fucose = an alpha-L-Fuc-(1-&gt;2)-beta-D-Gal-(1-&gt;4)-beta-D-GlcNAc derivative + GDP + H(+). The enzyme catalyses a ganglioside GA1 + GDP-beta-L-fucose = a ganglioside Fuc-GA1 + GDP + H(+). It catalyses the reaction a beta-D-Gal-(1-&gt;3)-beta-D-GlcNAc-(1-&gt;3)-beta-D-Gal-(1-&gt;4)-beta-D-Glc-(1&lt;-&gt;1')-Cer(d18:1(4E)) + GDP-beta-L-fucose = alpha-L-fucosyl-(1-&gt;2)- beta-D-galactosyl-(1-&gt;3)-N-acetyl-beta-D-glucosaminyl-(1-&gt;3)-beta-D-galactosyl-(1-&gt;4)-beta-D-glucosyl-(1&lt;-&gt;1')-N-acylsphing-4-enine + GDP + H(+). It carries out the reaction a neolactoside nLc4Cer(d18:1(4E)) + GDP-beta-L-fucose = a neolactoside IV(2)-alpha-Fuc-nLc4Cer(d18:1(4E)) + GDP + H(+). The catalysed reaction is a ganglioside GM1 + GDP-beta-L-fucose = a ganglioside Fuc-GM1 + GDP + H(+). The enzyme catalyses beta-D-galactosyl-(1-&gt;3)-N-acetyl-D-galactosamine + GDP-beta-L-fucose = alpha-L-fucosyl-(1-&gt;2)-beta-D-galactosyl-(1-&gt;3)-N-acetyl-D-galactosamine + GDP + H(+). Its pathway is protein modification; protein glycosylation. Functionally, catalyzes the transfer of L-fucose, from a guanosine diphosphate-beta-L-fucose, to the terminal galactose residue of glycoconjugates through an alpha(1,2) linkage leading to H antigen synthesis that is an intermediate substrate in the synthesis of ABO blood group antigens. H antigen is essential for maturation of the glomerular layer of the main olfactory bulb, in cell migration and early cell-cell contacts during tumor associated angiogenesis. Preferentially fucosylates soluble lactose and to a lesser extent fucosylates glycolipids gangliosides GA1 and GM1a. The sequence is that of Galactoside alpha-(1,2)-fucosyltransferase 1 from Saimiri boliviensis boliviensis (Bolivian squirrel monkey).